Consider the following 927-residue polypeptide: Small conductance calcium-activated potassium channel protein (927 aa).

The segment covering 1-31 (MSIQKLNDTTNSGYVSSEETDSLLVSSSNPS) has biased composition (polar residues). 3 disordered regions span residues 1-131 (MSIQ…EDVE), 181-251 (LSLK…VKSA), and 296-336 (HLHQ…SSST). The segment covering 45–62 (SNSTNGPTTGASTSSSGS) has biased composition (low complexity). A compositionally biased stretch (gly residues) spans 63–77 (VSGGGGGSGSGGGSA). 2 stretches are compositionally biased toward polar residues: residues 95–107 (TSTY…QSQH) and 200–214 (NLGT…SSIP). 2 stretches are compositionally biased toward low complexity: residues 219–232 (SRCR…RRAS) and 296–308 (HLHQ…SQQQ). Polar residues predominate over residues 314-336 (ITSSPTNGSRIIRQSSQPESSST). The helical transmembrane segment at 489–509 (ALVMGMFGIIVMVIENELSSA) threads the bilayer. The chain crosses the membrane as a helical span at residues 530–550 (TVILLGLIVAYHALEVQLFMI). A helical membrane pass occupies residues 569-589 (IGLELFICAIHPIPGEYYFQW). Residues 609-629 (VALSLPMFLRLYLICRVMLLH) form a helical membrane-spanning segment. The helical transmembrane segment at 658–678 (LMTICPGTVLLVFMVSLWIIA) threads the bilayer. The segment at residues 696-716 (LLNSMWLTAITFLCVGYGDIV) is an intramembrane region (pore-forming). Residues 724-744 (GITLTCGMVGAGCTALLVAVV) traverse the membrane as a helical segment. A calmodulin-binding region spans residues 763–839 (DTQLTKRLKN…ITDMAKTQNT (77 aa)).

It belongs to the potassium channel KCNN family. SK subfamily. In terms of assembly, heterooligomer. The complex is composed of 4 channel subunits each of which binds to a calmodulin subunit which regulates the channel activity through calcium-binding.

The protein resides in the membrane. In terms of biological role, forms a voltage-independent potassium channel activated by intracellular calcium. Activation is followed by membrane hyperpolarization. Thought to regulate neuronal excitability by contributing to the slow component of synaptic afterhyperpolarization. The channel is blocked by apamin. This is Small conductance calcium-activated potassium channel protein from Drosophila melanogaster (Fruit fly).